The sequence spans 548 residues: Probable malate:quinone oxidoreductase (548 aa).

Belongs to the MQO family. FAD is required as a cofactor.

The enzyme catalyses (S)-malate + a quinone = a quinol + oxaloacetate. Its pathway is carbohydrate metabolism; tricarboxylic acid cycle; oxaloacetate from (S)-malate (quinone route): step 1/1. This is Probable malate:quinone oxidoreductase from Escherichia coli O127:H6 (strain E2348/69 / EPEC).